The chain runs to 204 residues: FMN-dependent NADH:quinone oxidoreductase (204 aa).

Residues serine 10, 15–17, and 139–142 each bind FMN; these read SLS and TSGG.

It belongs to the azoreductase type 1 family. As to quaternary structure, homodimer. Requires FMN as cofactor.

The catalysed reaction is 2 a quinone + NADH + H(+) = 2 a 1,4-benzosemiquinone + NAD(+). The enzyme catalyses N,N-dimethyl-1,4-phenylenediamine + anthranilate + 2 NAD(+) = 2-(4-dimethylaminophenyl)diazenylbenzoate + 2 NADH + 2 H(+). Its function is as follows. Quinone reductase that provides resistance to thiol-specific stress caused by electrophilic quinones. Functionally, also exhibits azoreductase activity. Catalyzes the reductive cleavage of the azo bond in aromatic azo compounds to the corresponding amines. In Rhizobium leguminosarum bv. trifolii (strain WSM2304), this protein is FMN-dependent NADH:quinone oxidoreductase.